Reading from the N-terminus, the 80-residue chain is MVQDLPTPIGAGIYNIYTGVKHRDELAGASMPTVAQLGLEPPRFCAECGRRMVVQVRPDGWRAKCSRHGQVDSVDMEAKR.

This sequence belongs to the BsaP family. Requires iron-sulfur cluster as cofactor.

In terms of biological role, required for the activity of the biotin synthase BioB. The polypeptide is Biotin synthase auxiliary protein (Mycobacterium leprae (strain TN)).